Reading from the N-terminus, the 259-residue chain is 5'-nucleotidase SurE (259 aa).

Residues Asp8, Asp9, Ser40, and Asn92 each coordinate a divalent metal cation.

This sequence belongs to the SurE nucleotidase family. It depends on a divalent metal cation as a cofactor.

It localises to the cytoplasm. It catalyses the reaction a ribonucleoside 5'-phosphate + H2O = a ribonucleoside + phosphate. Functionally, nucleotidase that shows phosphatase activity on nucleoside 5'-monophosphates. This is 5'-nucleotidase SurE from Xanthomonas oryzae pv. oryzae (strain MAFF 311018).